A 272-amino-acid polypeptide reads, in one-letter code: HTH-type transcriptional repressor AllR (272 aa).

The disordered stretch occupies residues methionine 1 to glycine 20. The HTH iclR-type domain occupies alanine 21–leucine 83. The H-T-H motif DNA-binding region spans valine 43 to lysine 62. Residues valine 98–leucine 267 form the IclR-ED domain. Glyoxylate contacts are provided by residues serine 154 to alanine 156, aspartate 207, cysteine 217, and serine 234 to serine 236.

Functionally, negative regulator of allantoin and glyoxylate utilization operons. Binds to the gcl promoter and to the allS-allA intergenic region. The chain is HTH-type transcriptional repressor AllR (allR) from Salmonella typhi.